Reading from the N-terminus, the 251-residue chain is 5'-nucleotidase SurE (251 aa).

Asp8, Asp9, Ser40, and Asn95 together coordinate a divalent metal cation.

The protein belongs to the SurE nucleotidase family. The cofactor is a divalent metal cation.

The protein localises to the cytoplasm. The catalysed reaction is a ribonucleoside 5'-phosphate + H2O = a ribonucleoside + phosphate. Functionally, nucleotidase that shows phosphatase activity on nucleoside 5'-monophosphates. This Maridesulfovibrio salexigens (strain ATCC 14822 / DSM 2638 / NCIMB 8403 / VKM B-1763) (Desulfovibrio salexigens) protein is 5'-nucleotidase SurE.